Here is a 419-residue protein sequence, read N- to C-terminus: UDP-N-acetylglucosamine 1-carboxyvinyltransferase (419 aa).

22–23 (KN) contacts phosphoenolpyruvate. Arg-91 serves as a coordination point for UDP-N-acetyl-alpha-D-glucosamine. Cys-115 functions as the Proton donor in the catalytic mechanism. Cys-115 is modified (2-(S-cysteinyl)pyruvic acid O-phosphothioketal). Residues 120-124 (RPVDL), 160-163 (KVSV), Asp-305, and Ile-327 contribute to the UDP-N-acetyl-alpha-D-glucosamine site.

The protein belongs to the EPSP synthase family. MurA subfamily.

It is found in the cytoplasm. It carries out the reaction phosphoenolpyruvate + UDP-N-acetyl-alpha-D-glucosamine = UDP-N-acetyl-3-O-(1-carboxyvinyl)-alpha-D-glucosamine + phosphate. It participates in cell wall biogenesis; peptidoglycan biosynthesis. Cell wall formation. Adds enolpyruvyl to UDP-N-acetylglucosamine. This is UDP-N-acetylglucosamine 1-carboxyvinyltransferase from Serratia proteamaculans (strain 568).